Consider the following 561-residue polypeptide: Embryonal Fyn-associated substrate (561 aa).

One can recognise an SH3 domain in the interval T5–A68. Disordered stretches follow at residues A68–S123, H171–P215, L240–Y372, and D390–P422. A compositionally biased stretch (pro residues) spans V103 to S123. Y253 carries the post-translational modification Phosphotyrosine; by SRC. Short sequence motifs (SH3-binding) lie at residues R305 to P311 and R335 to P341. A compositionally biased stretch (pro residues) spans P308–A325. Residues V352 to Y372 are compositionally biased toward basic and acidic residues. The divergent helix-loop-helix motif stretch occupies residues F438–G488.

It belongs to the CAS family. Phosphorylated on multiple tyrosine residues. Phosphorylated on tyrosines by FYN and SRC. The protein has been detected in lung and placenta.

Its function is as follows. Docking protein which plays a central coordinating role for tyrosine-kinase-based signaling related to cell adhesion. May serve as an activator of SRC and a downstream effector. Interacts with the SH3 domain of FYN and with CRK, SRC, and YES. The polypeptide is Embryonal Fyn-associated substrate (EFS) (Homo sapiens (Human)).